A 274-amino-acid polypeptide reads, in one-letter code: Mitochondrial S-adenosylmethionine carrier protein (274 aa).

Solcar repeat units lie at residues proline 4–leucine 77, phenylalanine 86–leucine 168, and valine 177–leucine 265. The next 6 membrane-spanning stretches (helical) occupy residues glycine 5 to phenylalanine 25, isoleucine 49 to leucine 69, histidine 85 to isoleucine 105, arginine 142 to tryptophan 162, serine 182 to valine 202, and phenylalanine 238 to alanine 258.

This sequence belongs to the mitochondrial carrier (TC 2.A.29) family.

It localises to the mitochondrion inner membrane. It carries out the reaction S-adenosyl-L-homocysteine(out) + S-adenosyl-L-methionine(in) = S-adenosyl-L-homocysteine(in) + S-adenosyl-L-methionine(out). Functionally, mitochondrial S-adenosyl-L-methionine/S-adenosyl-L-homocysteine antiporter. Mediates the exchange of cytosolic S-adenosyl-L-methionine, the predominant methyl-group donor for macromolecule methylation processes, for mitochondrial S-adenosylhomocysteine(SAH), a by-product of methylation reactions. This chain is Mitochondrial S-adenosylmethionine carrier protein, found in Mus musculus (Mouse).